Here is a 62-residue protein sequence, read N- to C-terminus: Potassium channel toxin alpha-KTx 22.1 (62 aa).

The N-terminal stretch at 1–18 (MQKLFIVFVLFCILRLDA) is a signal peptide. 3 disulfides stabilise this stretch: Cys-28-Cys-46, Cys-33-Cys-59, and Cys-37-Cys-61.

The protein belongs to the short scorpion toxin superfamily. Potassium channel inhibitor family. Alpha-KTx 22 subfamily. In terms of tissue distribution, expressed by the venom gland.

It is found in the secreted. May block potassium channels. This chain is Potassium channel toxin alpha-KTx 22.1, found in Olivierus martensii (Manchurian scorpion).